The following is a 556-amino-acid chain: Formate--tetrahydrofolate ligase (556 aa).

65 to 72 (TPAGEGKT) serves as a coordination point for ATP.

It belongs to the formate--tetrahydrofolate ligase family.

It carries out the reaction (6S)-5,6,7,8-tetrahydrofolate + formate + ATP = (6R)-10-formyltetrahydrofolate + ADP + phosphate. It functions in the pathway one-carbon metabolism; tetrahydrofolate interconversion. In Acetivibrio thermocellus (strain ATCC 27405 / DSM 1237 / JCM 9322 / NBRC 103400 / NCIMB 10682 / NRRL B-4536 / VPI 7372) (Clostridium thermocellum), this protein is Formate--tetrahydrofolate ligase.